The sequence spans 451 residues: UPF0210 protein APL_1491 (451 aa).

Belongs to the UPF0210 family. Homodimer.

The protein is UPF0210 protein APL_1491 of Actinobacillus pleuropneumoniae serotype 5b (strain L20).